The sequence spans 1088 residues: Leucine-rich repeat receptor-like protein kinase PEPR2 (1088 aa).

A signal peptide spans 1-26 (MRNLGLLEITLLCSLFVYFRIDSVSS). The Extracellular segment spans residues 27 to 739 (LNSDGLALLS…QVKLSTWKIA (713 aa)). 3 N-linked (GlcNAc...) asparagine glycosylation sites follow: Asn-55, Asn-82, and Asn-122. LRR repeat units follow at residues 75 to 99 (GNVV…IGEL), 100 to 122 (KSLV…TLGN), 123 to 146 (CTSL…IFGS), 147 to 170 (LQNL…SVGG), 172 to 194 (IELV…LLGN), 195 to 219 (CSKL…LYLL), 221 to 243 (NLGE…SSNC), 244 to 267 (KKLV…IGNC), 269 to 291 (SLHS…MGML), 292 to 315 (RKVS…LGNC), 316 to 339 (SSLE…LSKL), 341 to 363 (KLQS…IWKI), 365 to 387 (SLTQ…VTQL), 388 to 411 (KHLK…LGLN), 412 to 435 (RSLE…LCHG), 436 to 459 (QKLR…IRQC), 460 to 485 (KTLE…SLSL), 487 to 506 (YVNL…LGSC), 507 to 529 (KNLL…ELGN), 530 to 554 (LQSL…LSGC), 556 to 577 (RLLY…SFRS), 578 to 602 (WKSL…LAEL), 603 to 627 (DRLS…GLLK), 629 to 651 (LRYG…LGAL), 652 to 676 (INLE…SLKS), and 678 to 698 (NQVD…LLSN). N-linked (GlcNAc...) asparagine glycosylation is found at Asn-149, Asn-159, Asn-183, Asn-194, Asn-209, Asn-229, Asn-266, Asn-279, and Asn-314. Residues Asn-373 and Asn-411 are each glycosylated (N-linked (GlcNAc...) asparagine). N-linked (GlcNAc...) asparagine glycosylation is found at Asn-537 and Asn-568. Asn-658 and Asn-698 each carry an N-linked (GlcNAc...) asparagine glycan. Residues 740–760 (LIAAGSSLSVLALLFALFLVL) form a helical membrane-spanning segment. Residues 761 to 1088 (CRCKRGTKTE…FVRSTSGSVH (328 aa)) are Cytoplasmic-facing. Thr-791 is subject to Phosphothreonine. A Protein kinase domain is found at 794-1080 (LDDKYIIGRG…KDLTDLESFV (287 aa)). Residues 800-808 (IGRGAHGVV) and Lys-822 each bind ATP. Phosphotyrosine is present on residues Tyr-868 and Tyr-908. Catalysis depends on Asp-921, which acts as the Proton acceptor. Residues Tyr-962 and Tyr-969 each carry the phosphotyrosine modification.

This sequence belongs to the protein kinase superfamily. Ser/Thr protein kinase family. Interacts with BAK1. Interacts with CLE14.

It is found in the cell membrane. It catalyses the reaction L-seryl-[protein] + ATP = O-phospho-L-seryl-[protein] + ADP + H(+). It carries out the reaction L-threonyl-[protein] + ATP = O-phospho-L-threonyl-[protein] + ADP + H(+). Its function is as follows. Acts as a receptor for PEP defense peptides. Unlike typical immune receptors, senses an endogenous elicitor that potentiates PAMP-inducible plant responses. The polypeptide is Leucine-rich repeat receptor-like protein kinase PEPR2 (PEPR2) (Arabidopsis thaliana (Mouse-ear cress)).